Here is a 249-residue protein sequence, read N- to C-terminus: V-type proton ATPase subunit D 2 (249 aa).

Belongs to the V-ATPase D subunit family. In terms of assembly, V-ATPase is a heteromultimeric enzyme made up of two complexes: the ATP-hydrolytic V1 complex and the proton translocation V0 complex. The V1 complex consists of three catalytic AB heterodimers that form a heterohexamer, three peripheral stalks each consisting of EG heterodimers, one central rotor including subunits D and F, and the regulatory subunits C and H. The proton translocation complex V0 consists of the proton transport subunit a, a ring of proteolipid subunits c9c'', rotary subunit d, subunits e and f, and the accessory subunits VhaAC45 and ATP6AP2.

In terms of biological role, subunit of the V1 complex of vacuolar(H+)-ATPase (V-ATPase), a multisubunit enzyme composed of a peripheral complex (V1) that hydrolyzes ATP and a membrane integral complex (V0) that translocates protons. V-ATPase is responsible for acidifying and maintaining the pH of intracellular compartments and in some cell types, is targeted to the plasma membrane, where it is responsible for acidifying the extracellular environment. This chain is V-type proton ATPase subunit D 2 (Vha36-3), found in Drosophila melanogaster (Fruit fly).